Consider the following 208-residue polypeptide: Large ribosomal subunit protein uL3 (208 aa).

Residues 134–153 (SKFHREAGSTGQCTSPGRTF) are disordered.

Belongs to the universal ribosomal protein uL3 family. In terms of assembly, part of the 50S ribosomal subunit. Forms a cluster with proteins L14 and L19.

One of the primary rRNA binding proteins, it binds directly near the 3'-end of the 23S rRNA, where it nucleates assembly of the 50S subunit. The polypeptide is Large ribosomal subunit protein uL3 (Treponema pallidum (strain Nichols)).